Reading from the N-terminus, the 703-residue chain is Protein teflon (703 aa).

The segment at M32 to H55 adopts a C2H2-type 1 zinc-finger fold. 3 disordered regions span residues T78–S111, S138–P161, and S339–E434. Composition is skewed to polar residues over residues Q84–D94 and S138–P147. Over residues P148–P161 the composition is skewed to basic and acidic residues. 2 stretches are compositionally biased toward polar residues: residues S339–V352 and S364–I373. 2 C2H2-type zinc fingers span residues Y649–H672 and F677–H700.

It belongs to the Teflon family.

The protein resides in the nucleus. It is found in the chromosome. Functionally, specifically required in males for proper segregation of autosomal bivalents at meiosis I. Expression is required in the male germ line prior to spermatocyte stage S4. May have a role as a bridging molecule maintaining adhesion to hold autosome bivalents together via heterochromatic connections. The chain is Protein teflon from Drosophila pseudoobscura pseudoobscura (Fruit fly).